Here is a 572-residue protein sequence, read N- to C-terminus: O-fucosyltransferase 16 (572 aa).

A helical; Signal-anchor for type II membrane protein membrane pass occupies residues 17–37 (LLPLVIAVSLSLLILFAFLSF). N-linked (GlcNAc...) asparagine glycosylation is found at N92 and N136. 274–276 (HLR) contacts substrate. N-linked (GlcNAc...) asparagine glycans are attached at residues N446 and N506. The disordered stretch occupies residues 498-572 (ESRKLGKKNK…EPELEAMLSD (75 aa)). Residues 521–541 (DQTEEDDPDWSEPDYEEEQSD) are compositionally biased toward acidic residues. Residue N549 is glycosylated (N-linked (GlcNAc...) asparagine). Residues 554–566 (DYDDPSTSDEPEL) show a composition bias toward acidic residues.

Belongs to the glycosyltransferase GT106 family.

The protein resides in the membrane. It participates in glycan metabolism. This is O-fucosyltransferase 16 from Arabidopsis thaliana (Mouse-ear cress).